A 323-amino-acid chain; its full sequence is Acetyl esterase (323 aa).

The Involved in the stabilization of the negatively charged intermediate by the formation of the oxyanion hole motif lies at 91-93; that stretch reads HGG. Residues Ser-165, Asp-262, and His-292 contribute to the active site.

It belongs to the 'GDXG' lipolytic enzyme family. Homodimer. Interacts with MalT and MelA.

The protein resides in the cytoplasm. Displays esterase activity towards short chain fatty esters (acyl chain length of up to 8 carbons). Able to hydrolyze triacetylglycerol (triacetin) and tributyrylglycerol (tributyrin), but not trioleylglycerol (triolein) or cholesterol oleate. Negatively regulates MalT activity by antagonizing maltotriose binding. Inhibits MelA galactosidase activity. In Salmonella schwarzengrund (strain CVM19633), this protein is Acetyl esterase.